Consider the following 307-residue polypeptide: Tropinone reductase homolog At2g29340 (307 aa).

Residue 13-37 coordinates NADP(+); that stretch reads LVTGGASGIGYAIVEELAGFGARIH. Serine 146 is a substrate binding site. Catalysis depends on tyrosine 159, which acts as the Proton acceptor.

It belongs to the short-chain dehydrogenases/reductases (SDR) family. SDR65C subfamily.

The sequence is that of Tropinone reductase homolog At2g29340 from Arabidopsis thaliana (Mouse-ear cress).